The following is a 188-amino-acid chain: GTP-dependent dephospho-CoA kinase (188 aa).

Residues Asp43, Val44, Asp62, Glu121, and Asp144 each contribute to the GTP site.

Belongs to the GTP-dependent DPCK family.

The catalysed reaction is 3'-dephospho-CoA + GTP = GDP + CoA + H(+). It participates in cofactor biosynthesis; coenzyme A biosynthesis. In terms of biological role, catalyzes the GTP-dependent phosphorylation of the 3'-hydroxyl group of dephosphocoenzyme A to form coenzyme A (CoA). The chain is GTP-dependent dephospho-CoA kinase from Methanococcoides burtonii (strain DSM 6242 / NBRC 107633 / OCM 468 / ACE-M).